The chain runs to 352 residues: C-C chemokine receptor type 5 (352 aa).

The Extracellular segment spans residues 1–30; the sequence is MDYQVSSPTYDIDYYTSGPCQKINVKQIAA. Tyr3 carries the post-translational modification Sulfotyrosine. Residues Ser6 and Ser7 are each glycosylated (O-linked (GalNAc...) serine). Sulfotyrosine is present on residues Tyr10, Tyr14, and Tyr15. 2 disulfide bridges follow: Cys20/Cys269 and Cys101/Cys178. The chain crosses the membrane as a helical span at residues 31 to 58; it reads RLLPPLYSLVFIFGFVGNMLVILILINC. Residues 59 to 68 lie on the Cytoplasmic side of the membrane; sequence KRLKSMTDIY. A helical membrane pass occupies residues 69–89; sequence LLNLAISDLFFLLTVPFWAHY. Topologically, residues 90 to 102 are extracellular; it reads AAAQWDFGNTMCQ. The chain crosses the membrane as a helical span at residues 103–124; the sequence is LLTGLYFIGFFSGIFFIILLTI. Over 125-141 the chain is Cytoplasmic; sequence DRYLAIVHAVFALKART. Residues 142-166 form a helical membrane-spanning segment; sequence VTFGVVTSVITWVVAVFASLPGIIF. Topologically, residues 167-198 are extracellular; sequence TRSQKEGLHYTCSSHFPYSQYQFWKNFQTLKI. The chain crosses the membrane as a helical span at residues 199-218; it reads VILGLVLPLLVMVICYSGIL. Topologically, residues 219-235 are cytoplasmic; sequence KTLLRCRNEKKRHRAVR. A helical membrane pass occupies residues 236 to 260; that stretch reads LIFTIMIVYFLFWAPYNIVLLLNTF. The Extracellular portion of the chain corresponds to 261–277; that stretch reads QEFFGLNNCSSSNRLDQ. Residues 278–301 form a helical membrane-spanning segment; it reads AMQVTETLGMTHCCINPIIYAFVG. Residues 302–352 lie on the Cytoplasmic side of the membrane; it reads EKFRNYLLVFFQKHIAKHFCKCCSIFQQEAPERASSVYTRSTGEQEISVGL. S-palmitoyl cysteine attachment occurs at residues Cys321, Cys323, and Cys324. Phosphoserine; by BARK1 occurs at positions 336, 337, 342, and 349.

The protein belongs to the G-protein coupled receptor 1 family. As to quaternary structure, interacts with PRAF2. Efficient ligand binding to CCL3/MIP-1alpha and CCL4/MIP-1beta requires sulfation, O-glycosylation and sialic acid modifications. Glycosylation on Ser-6 is required for efficient binding of CCL4. Interacts with GRK2. Interacts with ARRB1 and ARRB2. Interacts with CNIH4. Interacts with S100A4; this interaction stimulates T-lymphocyte chemotaxis. Post-translationally, sulfated on at least 2 of the N-terminal tyrosines. Sulfation is required for efficient binding of the chemokines, CCL3 and CCL4. Palmitoylation in the C-terminal is important for cell surface expression. In terms of processing, phosphorylation on serine residues in the C-terminal is stimulated by binding CC chemokines especially by APO-RANTES. Post-translationally, O-glycosylated, but not N-glycosylated. Ser-6 appears to be the major site even if Ser-7 may be also O-glycosylated. Also sialylated glycans present which contribute to chemokine binding. Thr-16 and Ser-17 may also be glycosylated and, if so, with small moieties such as a T-antigen.

The protein resides in the cell membrane. Its function is as follows. Receptor for a number of inflammatory CC-chemokines including CCL3/MIP-1-alpha, CCL4/MIP-1-beta and RANTES and subsequently transduces a signal by increasing the intracellular calcium ion level. May play a role in the control of granulocytic lineage proliferation or differentiation. Participates in T-lymphocyte migration to the infection site by acting as a chemotactic receptor. This is C-C chemokine receptor type 5 (CCR5) from Hylobates moloch (Silvery gibbon).